The primary structure comprises 262 residues: MEEIADKTFFRYCLLTLIFAGPPTAVLLKFLQAPYGKHNRTGWGPTVSPPIAWFVMESPTLWLTLLLFPFGRHALNPKSLLLFSPYLIHYFHRTIIYPLRLFRSSFPAGKNGFPITIAALAFTFNLLNGYIQARWVSHYKDDYEDGNWFWWRFVIGMVVFITGMYINITSDRTLVRLKKENRGGYVIPRGGWFELVSCPNYFGEAIEWLGWAVMTWSWAGIGFFLYTCSNLFPRARASHKWYIAKFKEEYPKTRKAVIPFVY.

The next 6 membrane-spanning stretches (helical) occupy residues 13–33 (CLLT…FLQA), 51–71 (IAWF…FPFG), 79–99 (SLLL…IYPL), 113–133 (FPIT…YIQA), 148–168 (WFWW…YINI), and 205–225 (AIEW…GFFL).

Belongs to the steroid 5-alpha reductase family.

It is found in the membrane. The catalysed reaction is a 3-oxo-5alpha-steroid + NADP(+) = a 3-oxo-Delta(4)-steroid + NADPH + H(+). It catalyses the reaction 5alpha-campestan-3-one + NADP(+) = campest-4-en-3-one + NADPH + H(+). It carries out the reaction (22S,24R)-22-hydroxy-5alpha-ergostan-3-one + NADP(+) = (22S)-22-hydroxycampest-4-en-3-one + NADPH + H(+). The enzyme catalyses 3-dehydro-6-deoxoteasterone + NADP(+) = (22R,23R)-22,23-dihydroxycampest-4-en-3-one + NADPH + H(+). Its pathway is plant hormone biosynthesis; brassinosteroid biosynthesis. With respect to regulation, inhibited by the 4-azasteroids 4-MA. In terms of biological role, involved in a reduction step in the biosynthesis of the plant steroid, brassinolide (BL); acts at the second step in brassinolide biosynthesis in the 5alpha-reduction of (24R)- 24-methylcholest-4-en-3-one, which is further modified to form campestanol. Can use progesterone, testosterone, androstenedione and campestenone as substrate. Also catalyzes the conversion of campest-4-en-3-one (campesta-4-en-3-one, 4-en-3-one) to campest-3-one (campesta-3-one, 3-one), of (22S,24R)-22-hydroxyergost-4-en-3-one (22-hydroxy-campesta-4-en-3-one, 22-OH-4-en-3-one) to (22S,24R)-22-hydroxy-5alpha-ergostan-3-one (22-hydroxy-campesta-3-one, 22-OH-3-one), and of (22R,23R)-22,23-dihydroxy-5alpha-campestan-3-one (22,23,diOH-4-en-3-one) to (22R,23R)-22,23-dihydroxycampest-4-en-3-one (6-deoxo3DT). Required for the brassinosteroid- (BR) dependent regulation of seed size and shape as well as embryo development. This is Steroid 5-alpha-reductase DET2 from Arabidopsis thaliana (Mouse-ear cress).